Here is a 402-residue protein sequence, read N- to C-terminus: Exodeoxyribonuclease 7 large subunit (402 aa).

This sequence belongs to the XseA family. As to quaternary structure, heterooligomer composed of large and small subunits.

The protein resides in the cytoplasm. It carries out the reaction Exonucleolytic cleavage in either 5'- to 3'- or 3'- to 5'-direction to yield nucleoside 5'-phosphates.. Its function is as follows. Bidirectionally degrades single-stranded DNA into large acid-insoluble oligonucleotides, which are then degraded further into small acid-soluble oligonucleotides. This Moorella thermoacetica (strain ATCC 39073 / JCM 9320) protein is Exodeoxyribonuclease 7 large subunit.